The following is a 682-amino-acid chain: Potassium-transporting ATPase ATP-binding subunit (682 aa).

4 helical membrane-spanning segments follow: residues 35–55 (VMFI…AMAG), 62–82 (ATFT…ANFA), 219–239 (IALT…TATI), and 254–274 (VLVA…LSAI). The active-site 4-aspartylphosphate intermediate is aspartate 307. Residues aspartate 344, glutamate 348, 377–384 (FTAQTRMS), and lysine 395 each bind ATP. Residues aspartate 518 and aspartate 522 each coordinate Mg(2+). 3 helical membrane passes run 588 to 608 (FAII…LNVM), 616 to 636 (AILS…PLAL), and 656 to 676 (IYGL…DLLL).

Belongs to the cation transport ATPase (P-type) (TC 3.A.3) family. Type IA subfamily. As to quaternary structure, the system is composed of three essential subunits: KdpA, KdpB and KdpC.

Its subcellular location is the cell inner membrane. The enzyme catalyses K(+)(out) + ATP + H2O = K(+)(in) + ADP + phosphate + H(+). In terms of biological role, part of the high-affinity ATP-driven potassium transport (or Kdp) system, which catalyzes the hydrolysis of ATP coupled with the electrogenic transport of potassium into the cytoplasm. This subunit is responsible for energy coupling to the transport system and for the release of the potassium ions to the cytoplasm. This chain is Potassium-transporting ATPase ATP-binding subunit, found in Klebsiella pneumoniae (strain 342).